A 310-amino-acid chain; its full sequence is Peroxidase 44 (310 aa).

An N-terminal signal peptide occupies residues 1–20 (MRSITALFFLFCFLAPSALA). Intrachain disulfides connect Cys-31/Cys-110, Cys-64/Cys-69, Cys-116/Cys-305, and Cys-194/Cys-218. Catalysis depends on His-62, which acts as the Proton acceptor. Ca(2+)-binding residues include Asp-63, Val-66, Gly-68, Asp-70, and Ser-72. Substrate is bound at residue Pro-156. His-187 contributes to the heme b binding site. Ser-188 is a Ca(2+) binding site. 3 residues coordinate Ca(2+): Asp-229, Thr-232, and Asp-237.

This sequence belongs to the peroxidase family. Classical plant (class III) peroxidase subfamily. The cofactor is heme b. Ca(2+) is required as a cofactor.

Its subcellular location is the secreted. It carries out the reaction 2 a phenolic donor + H2O2 = 2 a phenolic radical donor + 2 H2O. Removal of H(2)O(2), oxidation of toxic reductants, biosynthesis and degradation of lignin, suberization, auxin catabolism, response to environmental stresses such as wounding, pathogen attack and oxidative stress. These functions might be dependent on each isozyme/isoform in each plant tissue. This Arabidopsis thaliana (Mouse-ear cress) protein is Peroxidase 44 (PER44).